Reading from the N-terminus, the 422-residue chain is Cyclin-A2 (422 aa).

Methionine 1 carries the post-translational modification N-acetylmethionine. Residues methionine 1–arginine 62 form a disordered region. Serine 5 bears the Phosphoserine mark.

It belongs to the cyclin family. Cyclin AB subfamily. In terms of assembly, interacts with the CDK1 and CDK2 protein kinases to form serine/threonine kinase holoenzyme complexes. Interacts with CDK1 (hyperphosphorylated form in G1 and underphosphorylated forms in S and G2). Interacts with CDK2; the interaction increases from G1 to G2. Interacts (associated with CDK2 but not with CDK1) with SCAPER; regulates the activity of CCNA2/CDK2 by transiently maintaining CCNA2 in the cytoplasm. Forms a ternary complex with CDK2 and CDKN1B; CDKN1B inhibits the kinase activity of CDK2 through conformational rearrangements. Interacts with INCA1. (Microbial infection) Interacts with mouse cytomegalovirus/MCMV kinase M97; this interaction sequesters CCNA2 to the cytoplasm. In terms of processing, polyubiquitinated via 'Lys-11'-linked ubiquitin by the anaphase-promoting complex (APC/C), leading to its degradation by the proteasome. Deubiquitinated and stabilized by USP37 enables entry into S phase. Ubiquitinated during the G1 phase by the SCF(FBXO31) complex, leading to its proteasomal degradation. Ubiquitous. In the testis, expressed in germ cells and in the ovary, in both germline and somatic cells.

It is found in the nucleus. The protein localises to the cytoplasm. Cyclin which controls both the G1/S and the G2/M transition phases of the cell cycle. Functions through the formation of specific serine/threonine kinase holoenzyme complexes with the cyclin-dependent protein kinases CDK1 and CDK2. The cyclin subunit confers the substrate specificity of these complexes and differentially interacts with and activates CDK1 and CDK2 throughout the cell cycle. This chain is Cyclin-A2, found in Mus musculus (Mouse).